Here is a 475-residue protein sequence, read N- to C-terminus: Peroxisome proliferator-activated receptor gamma (475 aa).

Position 82 is a phosphoserine; by MAPK (Ser-82). The segment at residues 106–180 (AIECRVCSDK…VGMSHNAIRF (75 aa)) is a DNA-binding region (nuclear receptor). NR C4-type zinc fingers lie at residues 109-129 (CRVC…CEGC) and 146-168 (CDLN…FQKC). The interval 175 to 250 (HNAIRFGRMP…DKSPFVIYDM (76 aa)) is interaction with FAM120B. The NR LBD domain occupies 208 to 473 (DLRALAKHLY…HPLLQEIYKD (266 aa)). A Glycyl lysine isopeptide (Lys-Gly) (interchain with G-Cter in ubiquitin) cross-link involves residue Lys-222. The short motif at 465-473 (PLLQEIYKD) is the 9aaTAD element.

Belongs to the nuclear hormone receptor family. NR1 subfamily. In terms of assembly, interacts with FOXO1 (acetylated form). Heterodimer with other nuclear receptors, such as RXRA. The heterodimer with the retinoic acid receptor RXRA is called adipocyte-specific transcription factor ARF6. Interacts with NCOA6 coactivator, leading to a strong increase in transcription of target genes. Interacts with coactivator PPARBP, leading to a mild increase in transcription of target genes. Interacts with NOCA7 in a ligand-inducible manner. Interacts with NCOA1 and NCOA2 LXXLL motifs. Interacts with ASXL1, ASXL2, DNTTIP2, FAM120B, MAP2K1/MEK1, NR0B2, PDPK1, PRDM16, PRMT2 and TGFB1I1. Interacts (when activated by agonist) with PPP5C. Interacts with HELZ2 and THRAP3; the interaction stimulates the transcriptional activity of PPARG. Interacts with PER2, the interaction is ligand dependent and blocks PPARG recruitment to target promoters. Interacts with NOCT. Interacts with ACTN4. Interacts (when in the liganded conformation) with GPS2. Interacts with CRY1 and CRY2 in a ligand-dependent manner. In the absence of hormonal ligand, interacts with TACC1. In macrophages, interacts with PAQR3 and STUB1; the interactions promote PPARG poylubiquitination and STUB1-mediated degradation. Phosphorylated at basal conditions and dephosphorylated when treated with the ligand. May be dephosphorylated by PPP5C. The phosphorylated form may be inactive and dephosphorylation induces adipogenic activity. Post-translationally, ubiquitinated by E3 ubiquitin-protein ligase complex containing FBXO9; leading to proteasomal degradation. Ubiquitinated at Lys-222 by TRIM55 leading to proteasomal degradation. Ubiquitinated by E3 ubiquitin-protein ligase STUB1/CHIP; leading to proteasomal degradation.

It is found in the nucleus. It localises to the cytoplasm. Its activity is regulated as follows. PDPK1 activates its transcriptional activity independently of its kinase activity. Nuclear receptor that binds peroxisome proliferators such as hypolipidemic drugs and fatty acids. Once activated by a ligand, the nuclear receptor binds to DNA specific PPAR response elements (PPRE) and modulates the transcription of its target genes, such as acyl-CoA oxidase. It therefore controls the peroxisomal beta-oxidation pathway of fatty acids. Key regulator of adipocyte differentiation and glucose homeostasis. ARF6 acts as a key regulator of the tissue-specific adipocyte P2 (aP2) enhancer. Acts as a critical regulator of gut homeostasis by suppressing NF-kappa-B-mediated pro-inflammatory responses. Plays a role in the regulation of cardiovascular circadian rhythms by regulating the transcription of BMAL1 in the blood vessels. The protein is Peroxisome proliferator-activated receptor gamma (PPARG) of Oryctolagus cuniculus (Rabbit).